Consider the following 222-residue polypeptide: MEVKPKLYYFQGRGRMESIRWLLATAGVEFEEEFLETREQYEKLQKDGCLLFGQVPLVEIDGMLLTQTRAILSYLAAKYNLYGKDLKERVRIDMYADGTQDLMMMIIGAPFKAPQEKEESLALAVKRAKNRYFPVFEKILKDHGEAFLVGNQLSWADIQLLEAILMVEEVSAPVLSDFPLLQAFKTRISNIPTIKKFLQPGSQRKPPPDGHYVDVVRTVLKF.

N-acetylmethionine is present on Met1. A GST N-terminal domain is found at 3-83 (VKPKLYYFQG…YLAAKYNLYG (81 aa)). Residues Tyr9, 54–55 (QV), and 67–68 (QT) contribute to the glutathione site. The GST C-terminal domain maps to 85-208 (DLKERVRIDM…QPGSQRKPPP (124 aa)).

The protein belongs to the GST superfamily. Alpha family. Homodimer.

It localises to the cytoplasm. It catalyses the reaction RX + glutathione = an S-substituted glutathione + a halide anion + H(+). In terms of biological role, conjugation of reduced glutathione to a wide number of exogenous and endogenous hydrophobic electrophiles. The protein is Glutathione S-transferase alpha-4 (Gsta4) of Rattus norvegicus (Rat).